Here is a 691-residue protein sequence, read N- to C-terminus: ATP-dependent RNA helicase MRH4, mitochondrial (691 aa).

The N-terminal 31 residues, 1–31, are a transit peptide targeting the mitochondrion; the sequence is MLIGQVSRLSAIPPLALQHTLRPLHSSSVLA. A disordered region spans residues 31-148; that stretch reads AAGGKRPKQS…ATMPPNLTPR (118 aa). The span at 39 to 49 shows a compositional bias: polar residues; the sequence is QSPSHSRNSPR. Residues 50 to 68 are compositionally biased toward basic and acidic residues; it reads QKPDWEKRGSNRGRSEQPR. A compositionally biased stretch (low complexity) spans 94-103; that stretch reads SDSSSGSSAS. A compositionally biased stretch (polar residues) spans 111–126; the sequence is VPTSSRRLLPFSSSDT. The Q motif motif lies at 183–213; it reads RTFDDFGLEEGLVKSLKGLYGEDGKTTPIET. Residues 225–433 form the Helicase ATP-binding domain; it reads ASAPIGSQRV…TTNPFFTKKE (209 aa). 238-245 contacts ATP; sequence AETGSGKT. Positions 382–385 match the DEAD box motif; it reads DEAD. Residues 474–691 form the Helicase C-terminal domain; the sequence is TLAEDAKAAK…VGAMGKRVRT (218 aa). The segment at 644-667 is disordered; the sequence is LGEGAKNNKGGKGQGPLKKDGKTA.

This sequence belongs to the DEAD box helicase family. MRH4 subfamily.

The protein resides in the mitochondrion. It catalyses the reaction ATP + H2O = ADP + phosphate + H(+). Its function is as follows. ATP-binding RNA helicase involved in mitochondrial RNA metabolism. Required for maintenance of mitochondrial DNA. In Cryptococcus neoformans var. neoformans serotype D (strain JEC21 / ATCC MYA-565) (Filobasidiella neoformans), this protein is ATP-dependent RNA helicase MRH4, mitochondrial (MRH4).